The following is a 198-amino-acid chain: Protein GrpE (198 aa).

The disordered stretch occupies residues 1–56 (MVEKKKSQAEKNNQSATEEEIEKAVKGSKRDSNAADEKNSASAAASSSAVSDAEPA). Residues 22–39 (EKAVKGSKRDSNAADEKN) show a composition bias toward basic and acidic residues. Over residues 40–56 (SASAAASSSAVSDAEPA) the composition is skewed to low complexity.

The protein belongs to the GrpE family. Homodimer.

Its subcellular location is the cytoplasm. Its function is as follows. Participates actively in the response to hyperosmotic and heat shock by preventing the aggregation of stress-denatured proteins, in association with DnaK and GrpE. It is the nucleotide exchange factor for DnaK and may function as a thermosensor. Unfolded proteins bind initially to DnaJ; upon interaction with the DnaJ-bound protein, DnaK hydrolyzes its bound ATP, resulting in the formation of a stable complex. GrpE releases ADP from DnaK; ATP binding to DnaK triggers the release of the substrate protein, thus completing the reaction cycle. Several rounds of ATP-dependent interactions between DnaJ, DnaK and GrpE are required for fully efficient folding. The polypeptide is Protein GrpE (Oenococcus oeni (strain ATCC BAA-331 / PSU-1)).